A 298-amino-acid polypeptide reads, in one-letter code: NFU1 iron-sulfur cluster scaffold homolog, mitochondrial (298 aa).

The nifU stretch occupies residues 194 to 262 (IKELLDTRIR…IPEVESVEQV (69 aa)). [4Fe-4S] cluster is bound by residues C231 and C234.

This sequence belongs to the NifU family.

It localises to the mitochondrion. Functionally, molecular scaffold for [Fe-S] cluster assembly of mitochondrial iron-sulfur proteins. The chain is NFU1 iron-sulfur cluster scaffold homolog, mitochondrial from Drosophila grimshawi (Hawaiian fruit fly).